The sequence spans 878 residues: Protein translocase subunit SecA (878 aa).

Residues Gln-79, 97–101 (GEGKT), and Asp-487 each bind ATP.

This sequence belongs to the SecA family.

The protein localises to the plastid. Its subcellular location is the chloroplast stroma. The protein resides in the chloroplast thylakoid membrane. The catalysed reaction is ATP + H2O + cellular proteinSide 1 = ADP + phosphate + cellular proteinSide 2.. Has a central role in coupling the hydrolysis of ATP to the transfer of proteins across the thylakoid membrane. The protein is Protein translocase subunit SecA of Antithamnion sp. (Red alga).